Reading from the N-terminus, the 689-residue chain is Putative ATP-dependent helicase IRC3 (689 aa).

The Helicase ATP-binding domain maps to 46–211 (NSIRQGTKRI…SMVMDKIVYH (166 aa)). ATP is bound at residue 59–66 (LATGGGKT). A DEAH box motif is present at residues 158–161 (DEAH). A Helicase C-terminal domain is found at 265-438 (ILKTYLHKKQ…KIDERLRALF (174 aa)).

This sequence belongs to the helicase family. IRC3 subfamily.

The protein resides in the mitochondrion. This is Putative ATP-dependent helicase IRC3 (IRC3) from Saccharomyces cerevisiae (strain ATCC 204508 / S288c) (Baker's yeast).